The following is a 649-amino-acid chain: Nitrosuccinic acid synthase npaA (649 aa).

The protein belongs to the nitrosuccinic acid synthase family. FAD is required as a cofactor.

The catalysed reaction is L-aspartate + 3 NADPH + 3 O2 + 2 H(+) = 2-nitrobutanedioate + 3 NADP(+) + 4 H2O. It functions in the pathway mycotoxin biosynthesis. Functionally, nitrosuccinic acid synthase; part of the gene cluster that mediates the biosynthesis of the deadly neurotoxic nitroalkane 3-nitropropanoic acid (3-NPA) that acts as an antimetabolite of succinate and irreversibly inhibits succinate dehydrogenase and disrupts mitochondrial oxidative phosphorylation. NpaA catalyzes the iterative oxidation of L-aspartic acid to nitrosuccinic acid (2-nitrobutanedioate). Alternative amino acid substrates such as L-glutamate and D-aspartate are not accepted by npaA as a substrate, showing the strict substrate specificity toward L-aspartate. The nitrosuccinic acid decarboxylase npaB then facilitates decarboxylation of Nitrosuccinic acid to produce 3-NPA. In Aspergillus oryzae (strain ATCC 42149 / RIB 40) (Yellow koji mold), this protein is Nitrosuccinic acid synthase npaA.